Reading from the N-terminus, the 198-residue chain is Syndecan-4 (198 aa).

The N-terminal stretch at 1-18 is a signal peptide; that stretch reads MAPARLFALLLLFVGGVA. Residues 19 to 145 lie on the Extracellular side of the membrane; sequence ESIRETEVID…QGSNIFERTE (127 aa). Ser-39, Ser-61, and Ser-63 each carry an O-linked (Xyl...) (glycosaminoglycan) serine glycan. Ser-95 carries O-linked (Xyl...) (chondroitin sulfate) serine glycosylation. The helical transmembrane segment at 146 to 170 threads the bilayer; that stretch reads VLAALIVGGIVGILFAVFLILLLMY. Residues 171–198 are Cytoplasmic-facing; the sequence is RMKKKDEGSYDLGKKPIYKKAPTNEFYA.

Belongs to the syndecan proteoglycan family. Homodimer. Interacts with CDCP1 and SDCBP. Interacts (via its cytoplasmic domain) with GIPC (via its PDZ domain). Interacts (via its cytoplasmic domain) with NUDT16L1. Interacts with DNM2; this interaction is markedly enhanced at focal ahesion site upon induction of focal adhesions and stress-fiber formation. Shedding is enhanced by a number of factors such as heparanase, thrombin or EGF. Also by stress and wound healing. PMA-mediated shedding is inhibited by TIMP3. Post-translationally, O-glycosylated; contains both chondroitin sulfate and heparan sulfate. Ser-39, Ser-61 and Ser-63 can all be modified by either chondroitin sulfate or heparan sulfate, and the protein exists in forms that contain only chondroitin sulfate, only heparan sulfate and both chondroitin sulfate and heparan sulfate.

It is found in the membrane. The protein resides in the secreted. In terms of biological role, cell surface proteoglycan which regulates exosome biogenesis in concert with SDCBP and PDCD6IP. In Pongo abelii (Sumatran orangutan), this protein is Syndecan-4.